The sequence spans 728 residues: Phosphoribosylformylglycinamidine synthase subunit PurL (728 aa).

The active site involves His-42. ATP is bound by residues Tyr-45 and Lys-84. Glu-86 contributes to the Mg(2+) binding site. Substrate is bound by residues 87 to 90 and Arg-109; that span reads SHNH. Residue His-88 is the Proton acceptor of the active site. A Mg(2+)-binding site is contributed by Asp-110. Gln-237 provides a ligand contact to substrate. Asp-265 is a Mg(2+) binding site. 309–311 lines the substrate pocket; sequence ESQ. Residues Asp-491 and Gly-528 each contribute to the ATP site. Residue Asn-529 participates in Mg(2+) binding. Ser-531 contributes to the substrate binding site.

Belongs to the FGAMS family. Monomer. Part of the FGAM synthase complex composed of 1 PurL, 1 PurQ and 2 PurS subunits.

Its subcellular location is the cytoplasm. The catalysed reaction is N(2)-formyl-N(1)-(5-phospho-beta-D-ribosyl)glycinamide + L-glutamine + ATP + H2O = 2-formamido-N(1)-(5-O-phospho-beta-D-ribosyl)acetamidine + L-glutamate + ADP + phosphate + H(+). Its pathway is purine metabolism; IMP biosynthesis via de novo pathway; 5-amino-1-(5-phospho-D-ribosyl)imidazole from N(2)-formyl-N(1)-(5-phospho-D-ribosyl)glycinamide: step 1/2. Part of the phosphoribosylformylglycinamidine synthase complex involved in the purines biosynthetic pathway. Catalyzes the ATP-dependent conversion of formylglycinamide ribonucleotide (FGAR) and glutamine to yield formylglycinamidine ribonucleotide (FGAM) and glutamate. The FGAM synthase complex is composed of three subunits. PurQ produces an ammonia molecule by converting glutamine to glutamate. PurL transfers the ammonia molecule to FGAR to form FGAM in an ATP-dependent manner. PurS interacts with PurQ and PurL and is thought to assist in the transfer of the ammonia molecule from PurQ to PurL. The sequence is that of Phosphoribosylformylglycinamidine synthase subunit PurL from Campylobacter jejuni subsp. doylei (strain ATCC BAA-1458 / RM4099 / 269.97).